The chain runs to 402 residues: MSRVSQARNLGKYFLLIDNMLVVLGFFVVFPLISIRFVDQMGWAAVMVGIALGLRQFIQQGLGIFGGAIADRFGAKPMIVTGMLMRAAGFATMGIAHEPWLLWFSCLLSGLGGTLFDPPRSALVVKLIRPQQRGRFFSLLMMQDSASAVIGALLGSWLLQYDFRLVCATGPVLFVLCAAFNAWLLPAWKLSTVRTPVREGMTRVMRDKRFVTYVLTLAGYYMLAVQVMLMLPIMVNDVAGAPSAVKWMYAIEACLSLTLLYPIARWSEKHFRLEHRLMAGLLIMSLSMMPVGMVSGLQQLFTLICLFYIGSIIAEPARETLSASLADARARGSYMGFSRLGLAIGGAIGYIGGGWLFDLGKSAHQPELPWMMLGIIGIFTFLALGWQFSQKRAARRLLERDA.

Residues 1–12 (MSRVSQARNLGK) are Cytoplasmic-facing. Residues 13-33 (YFLLIDNMLVVLGFFVVFPLI) form a helical membrane-spanning segment. Over 34–98 (SIRFVDQMGW…GFATMGIAHE (65 aa)) the chain is Periplasmic. Residues 99–116 (PWLLWFSCLLSGLGGTLF) form a helical membrane-spanning segment. At 117–138 (DPPRSALVVKLIRPQQRGRFFS) the chain is on the cytoplasmic side. The helical transmembrane segment at 139–159 (LLMMQDSASAVIGALLGSWLL) threads the bilayer. Over 160–164 (QYDFR) the chain is Periplasmic. The chain crosses the membrane as a helical span at residues 165-185 (LVCATGPVLFVLCAAFNAWLL). Residues 186 to 213 (PAWKLSTVRTPVREGMTRVMRDKRFVTY) lie on the Cytoplasmic side of the membrane. A helical membrane pass occupies residues 214-234 (VLTLAGYYMLAVQVMLMLPIM). Topologically, residues 235 to 243 (VNDVAGAPS) are periplasmic. A helical membrane pass occupies residues 244-264 (AVKWMYAIEACLSLTLLYPIA). Residues 265–276 (RWSEKHFRLEHR) lie on the Cytoplasmic side of the membrane. The chain crosses the membrane as a helical span at residues 277 to 297 (LMAGLLIMSLSMMPVGMVSGL). At 298-299 (QQ) the chain is on the periplasmic side. A helical transmembrane segment spans residues 300-320 (LFTLICLFYIGSIIAEPARET). The Cytoplasmic segment spans residues 321–339 (LSASLADARARGSYMGFSR). The helical transmembrane segment at 340–360 (LGLAIGGAIGYIGGGWLFDLG) threads the bilayer. The Periplasmic portion of the chain corresponds to 361–367 (KSAHQPE). The helical transmembrane segment at 368–388 (LPWMMLGIIGIFTFLALGWQF) threads the bilayer. Residues 389–402 (SQKRAARRLLERDA) are Cytoplasmic-facing.

The protein belongs to the major facilitator superfamily. DHA1 family. MdtH (TC 2.A.1.2.21) subfamily.

Its subcellular location is the cell inner membrane. The sequence is that of Multidrug resistance protein MdtH from Shigella flexneri serotype 5b (strain 8401).